Consider the following 92-residue polypeptide: MDLVRAHVFISGRVQGVSFRAYTRDRAREAQVKGWVRNLSDGRVEAVFEGTRPAVQKLISWCYSGPSQAQVERVEVHWEEPTGKEGIFTIVW.

Residues 5-92 (RAHVFISGRV…GKEGIFTIVW (88 aa)) enclose the Acylphosphatase-like domain. Catalysis depends on residues Arg20 and Asn38.

It belongs to the acylphosphatase family.

The enzyme catalyses an acyl phosphate + H2O = a carboxylate + phosphate + H(+). The sequence is that of Acylphosphatase (acyP) from Chloroflexus aurantiacus (strain ATCC 29366 / DSM 635 / J-10-fl).